A 917-amino-acid polypeptide reads, in one-letter code: Probable dipeptidyl-aminopeptidase B (917 aa).

Basic and acidic residues predominate over residues 1–16 (MATEKGHGRDDEERVP). Residues 1–21 (MATEKGHGRDDEERVPLTRGS) are disordered. At 1–99 (MATEKGHGRD…KPMHKSVKIA (99 aa)) the chain is on the cytoplasmic side. A helical; Signal-anchor for type II membrane protein transmembrane segment spans residues 100-120 (LWTLLFLSLGGWSLAFVLFIF). Residues 121-917 (RSHDTYETPI…RAATWAGLSI (797 aa)) lie on the Vacuolar side of the membrane. N135, N351, and N574 each carry an N-linked (GlcNAc...) asparagine glycan. Catalysis depends on S756, which acts as the Charge relay system. The N-linked (GlcNAc...) asparagine glycan is linked to N815. Active-site charge relay system residues include D833 and H866. Residue N902 is glycosylated (N-linked (GlcNAc...) asparagine).

Belongs to the peptidase S9B family.

It localises to the vacuole membrane. It catalyses the reaction Release of an N-terminal dipeptide, Xaa-Yaa-|-Zaa-, from a polypeptide, preferentially when Yaa is Pro, provided Zaa is neither Pro nor hydroxyproline.. In terms of biological role, type IV dipeptidyl-peptidase which removes N-terminal dipeptides sequentially from polypeptides having unsubstituted N-termini provided that the penultimate residue is proline. The sequence is that of Probable dipeptidyl-aminopeptidase B (DAPB) from Ajellomyces capsulatus (strain H88) (Darling's disease fungus).